We begin with the raw amino-acid sequence, 225 residues long: tRNA (guanine-N(1)-)-methyltransferase (225 aa).

Residues Gly112 and 132 to 137 each bind S-adenosyl-L-methionine; that span reads IGDYVL.

The protein belongs to the RNA methyltransferase TrmD family. As to quaternary structure, homodimer.

It is found in the cytoplasm. It carries out the reaction guanosine(37) in tRNA + S-adenosyl-L-methionine = N(1)-methylguanosine(37) in tRNA + S-adenosyl-L-homocysteine + H(+). Functionally, specifically methylates guanosine-37 in various tRNAs. This chain is tRNA (guanine-N(1)-)-methyltransferase, found in Porphyromonas gingivalis (strain ATCC 33277 / DSM 20709 / CIP 103683 / JCM 12257 / NCTC 11834 / 2561).